We begin with the raw amino-acid sequence, 400 residues long: NADPH dehydrogenase 3 (400 aa).

FMN-binding residues include Thr38 and Gln115. The substrate site is built by His192 and Asn195. Tyr197 serves as the catalytic Proton donor. Residues Arg244 and Arg349 each contribute to the FMN site. Tyr376 lines the substrate pocket.

Homodimer or heterodimer with OYE2. The cofactor is FMN.

The enzyme catalyses A + NADPH + H(+) = AH2 + NADP(+). Functionally, flavin-dependent enoate reductase that catalyzes the chemo- and stereoslective hydrogenation of electron-poor alkenes. The enzyme is reduced by NADPH, and oxygen, quinones, and alpha,beta-unsaturated aldehydes and ketones can act as electron acceptors to complete catalytic turnover. The physiological oxidant remains elusive. Has a prooxidant activity, increasing reactive oxygen species (ROS) levels when overexpressed. Formation of OYE2-OYE3 heterodimers contribute to the induction of programmed cell death upon oxidative stress. The sequence is that of NADPH dehydrogenase 3 from Saccharomyces cerevisiae (strain ATCC 204508 / S288c) (Baker's yeast).